Consider the following 351-residue polypeptide: MVNTLPKPGIKTPSKETVLTPRFYTTDFETAANLDLSAQENELQAMLAEMRADYNRHHFVRDEAFEQSWEHIDGEARQAFIEYLERSCISEFSGFLLFKELSRKLKNRSPVLAEMFQLMARDEARHAGFLNKAMGDFKLSLDLATVTKTRTYTFFPIEWVLYTVYLSEKIGYWRYIIIFRHLEKHPENQFYPIFRYFESWCQDENRHGDIFKALLRSQPQLWNNWKARLWSRFFLLSVFATHTLTVHERSGFYKSLGLDATDFDLQVVRNTNETAGRAFPVMLNTEHPKFFPLLQRCAGYNLNISEIERSSQPKFVKLIRKLPLIAAIVWNLLMVYLIKPIDTEALRETVR.

This sequence belongs to the AcsF family. Fe cation is required as a cofactor.

It catalyses the reaction Mg-protoporphyrin IX 13-monomethyl ester + 3 NADPH + 3 O2 + 2 H(+) = 3,8-divinyl protochlorophyllide a + 3 NADP(+) + 5 H2O. It participates in porphyrin-containing compound metabolism; chlorophyll biosynthesis (light-independent). In terms of biological role, catalyzes the formation of the isocyclic ring in chlorophyll biosynthesis. Mediates the cyclase reaction, which results in the formation of divinylprotochlorophyllide (Pchlide) characteristic of all chlorophylls from magnesium-protoporphyrin IX 13-monomethyl ester (MgPMME). The polypeptide is Magnesium-protoporphyrin IX monomethyl ester [oxidative] cyclase 1 (Nostoc sp. (strain PCC 7120 / SAG 25.82 / UTEX 2576)).